The sequence spans 214 residues: tRNA (guanine-N(7)-)-methyltransferase (214 aa).

S-adenosyl-L-methionine-binding residues include Glu44, Glu69, Asp96, and Asp118. Asp118 is an active-site residue. Substrate is bound by residues Lys122, Asp154, and 191–194; that span reads TEYE.

It belongs to the class I-like SAM-binding methyltransferase superfamily. TrmB family.

The catalysed reaction is guanosine(46) in tRNA + S-adenosyl-L-methionine = N(7)-methylguanosine(46) in tRNA + S-adenosyl-L-homocysteine. The protein operates within tRNA modification; N(7)-methylguanine-tRNA biosynthesis. Its function is as follows. Catalyzes the formation of N(7)-methylguanine at position 46 (m7G46) in tRNA. The chain is tRNA (guanine-N(7)-)-methyltransferase from Listeria innocua serovar 6a (strain ATCC BAA-680 / CLIP 11262).